Reading from the N-terminus, the 114-residue chain is Hemerythrin subunit 2 (114 aa).

Residues His26, His55, Glu59, His74, His78, His102, and Asp107 each coordinate Fe cation.

It belongs to the hemerythrin family.

Functionally, hemerythrin is a respiratory protein in blood cells of certain marine worms. The oxygen-binding site in each chain contains two iron atoms. This Golfingia vulgaris (Marine worm) protein is Hemerythrin subunit 2.